We begin with the raw amino-acid sequence, 576 residues long: Tudor and KH domain-containing protein homolog (576 aa).

The interval 40 to 60 is disordered; sequence EEADSGGQRPASGIRGQTEEQ. KH domains follow at residues 65–127 and 136–199; these read EVCL…RALL and VVKV…RKML. Positions 209–224 are enriched in basic and acidic residues; the sequence is LVRSMEEVEQRREPRR. The segment at 209–253 is disordered; it reads LVRSMEEVEQRREPRRSPTNSIASSMYSSQTSLSSHTQPRDKLMA. The span at 232 to 243 shows a compositional bias: low complexity; sequence SSMYSSQTSLSS. The Tudor domain maps to 310-375; it reads APYVGQIVAA…CELRTDFLTL (66 aa). Residues 556-576 form a disordered region; it reads ATDLENGNNNNASTTNGASAH. Low complexity predominate over residues 561–576; it reads NGNNNNASTTNGASAH.

It belongs to the Tdrkh family. As to quaternary structure, interacts (via C-terminus) with AGO3 (via the N-terminal region when symmetrically methylated on arginine residues); this interaction is RNA-independent and may be required for AGO3 localization to the nuage. Interacts (via Tudor domain) with piwi (via N-terminus). Interacts with tral and me31B. Ovaries (at protein level). Expressed in the ovary and testis.

It localises to the cytoplasm. The protein localises to the nucleus. It is found in the cytoplasmic ribonucleoprotein granule. Functionally, involved in the piwi-interacting RNA (piRNA) metabolic process, which mediates the repression of transposable elements during meiosis by forming complexes composed of piRNAs and Piwi proteins, and governs the methylation and subsequent repression of transposons which is essential for germline integrity. Likely to act by recruiting Piwi proteins such as AGO3 and piwi to the piRNA biogenesis machinery in the nuage. Required for the final steps of primary piRNA biogenesis by participating in the 3' end-trimming of piwi-bound intermediates into mature piRNAs. The protein is Tudor and KH domain-containing protein homolog of Drosophila melanogaster (Fruit fly).